Here is a 350-residue protein sequence, read N- to C-terminus: Methionine import ATP-binding protein MetN 1 (350 aa).

The ABC transporter domain occupies 12-251 (IDLKNITVLF…PSREVTQDFV (240 aa)). 48–55 (GYSGAGKS) lines the ATP pocket.

Belongs to the ABC transporter superfamily. Methionine importer (TC 3.A.1.24) family. As to quaternary structure, the complex is composed of two ATP-binding proteins (MetN), two transmembrane proteins (MetI) and a solute-binding protein (MetQ).

It localises to the cell membrane. The catalysed reaction is L-methionine(out) + ATP + H2O = L-methionine(in) + ADP + phosphate + H(+). It carries out the reaction D-methionine(out) + ATP + H2O = D-methionine(in) + ADP + phosphate + H(+). In terms of biological role, part of the ABC transporter complex MetNIQ involved in methionine import. Responsible for energy coupling to the transport system. This is Methionine import ATP-binding protein MetN 1 from Oenococcus oeni (strain ATCC BAA-331 / PSU-1).